The chain runs to 426 residues: MSKSENLYSAARELIPGGVNSPVRAFTGVGGTPLFIEKADGAYLYDVDGKAYIDYVGSWGPMVLGHNHPAIRNAVIEAAERGLSFGAPTEMEVKMAELVTNLVPTMDMVRMVNSGTEATMSAIRLARGFTGRDKIIKFEGCYHGHADCLLVKAGSGALTLGQPNSPGVPADFAKHTLTCTYNDLTSVRAAFEQYPQEIACIIVEPVAGNMNCVPPLPEFLPGLRALCDEFGALLIIDEVMTGFRVALAGAQDYYGVVPDLTCLGKIIGGGMPVGAFGGRRDVMDALAPTGPVYQAGTLSGNPIAMAAGFACLNEVAQPGIHETLDELTTRLAEGLCEAAQEVGIPLVVNHVGGMFGIFFTDAETVTCYQDVMACDVERFKRFFHLMLEEGVYLAPSAFEAGFMSVAHSEEDINNTIDAARRVFAKQ.

Residue Lys265 is modified to N6-(pyridoxal phosphate)lysine.

The protein belongs to the class-III pyridoxal-phosphate-dependent aminotransferase family. HemL subfamily. In terms of assembly, homodimer. The cofactor is pyridoxal 5'-phosphate.

Its subcellular location is the cytoplasm. The catalysed reaction is (S)-4-amino-5-oxopentanoate = 5-aminolevulinate. Its pathway is porphyrin-containing compound metabolism; protoporphyrin-IX biosynthesis; 5-aminolevulinate from L-glutamyl-tRNA(Glu): step 2/2. In Salmonella choleraesuis (strain SC-B67), this protein is Glutamate-1-semialdehyde 2,1-aminomutase.